The primary structure comprises 132 residues: Large ribosomal subunit protein bL19 (132 aa).

Belongs to the bacterial ribosomal protein bL19 family.

In terms of biological role, this protein is located at the 30S-50S ribosomal subunit interface and may play a role in the structure and function of the aminoacyl-tRNA binding site. The polypeptide is Large ribosomal subunit protein bL19 (Nitrosomonas europaea (strain ATCC 19718 / CIP 103999 / KCTC 2705 / NBRC 14298)).